The following is a 354-amino-acid chain: Uroporphyrinogen decarboxylase (354 aa).

Residues 27–31 (RQAGR), D77, Y154, T209, and H327 each bind substrate.

Belongs to the uroporphyrinogen decarboxylase family. Homodimer.

Its subcellular location is the cytoplasm. The catalysed reaction is uroporphyrinogen III + 4 H(+) = coproporphyrinogen III + 4 CO2. It participates in porphyrin-containing compound metabolism; protoporphyrin-IX biosynthesis; coproporphyrinogen-III from 5-aminolevulinate: step 4/4. Its function is as follows. Catalyzes the decarboxylation of four acetate groups of uroporphyrinogen-III to yield coproporphyrinogen-III. This Klebsiella pneumoniae subsp. pneumoniae (strain ATCC 700721 / MGH 78578) protein is Uroporphyrinogen decarboxylase.